The sequence spans 314 residues: DNA-directed RNA polymerase subunit alpha (314 aa).

Residues 1–228 are alpha N-terminal domain (alpha-NTD); that stretch reads MIEIEKPKIE…EHLNIFVGLT (228 aa). The tract at residues 246–314 is alpha C-terminal domain (alpha-CTD); it reads EKVLEMTIEE…ELGLGLRKDD (69 aa).

The protein belongs to the RNA polymerase alpha chain family. In terms of assembly, homodimer. The RNAP catalytic core consists of 2 alpha, 1 beta, 1 beta' and 1 omega subunit. When a sigma factor is associated with the core the holoenzyme is formed, which can initiate transcription.

The catalysed reaction is RNA(n) + a ribonucleoside 5'-triphosphate = RNA(n+1) + diphosphate. In terms of biological role, DNA-dependent RNA polymerase catalyzes the transcription of DNA into RNA using the four ribonucleoside triphosphates as substrates. The polypeptide is DNA-directed RNA polymerase subunit alpha (Bacillus cytotoxicus (strain DSM 22905 / CIP 110041 / 391-98 / NVH 391-98)).